Here is a 91-residue protein sequence, read N- to C-terminus: Potassium channel toxin BuTXK-beta (91 aa).

Positions 1-20 (MQRNLVVLLLLGMVALSSCG) are cleaved as a signal peptide. Positions 21-27 (LREKHFQ) are excised as a propeptide. Residues 54-91 (QFGCPAYQGYCDDHCQDIKKEEGFCHGMKCKCGIPMGF) form the BetaSPN-type CS-alpha/beta domain. 3 disulfides stabilise this stretch: Cys-57–Cys-78, Cys-64–Cys-83, and Cys-68–Cys-85.

It belongs to the long chain scorpion toxin family. Class 1 subfamily. Expressed by the venom gland.

The protein resides in the secreted. Functionally, inhibits voltage-gated potassium channel. This is Potassium channel toxin BuTXK-beta from Buthus israelis (Israeli scorpion).